A 260-amino-acid chain; its full sequence is Pyridoxine 5'-phosphate synthase (260 aa).

N10 and R21 together coordinate 3-amino-2-oxopropyl phosphate. H46 functions as the Proton acceptor in the catalytic mechanism. Residues R48 and H53 each contribute to the 1-deoxy-D-xylulose 5-phosphate site. E76 acts as the Proton acceptor in catalysis. T113 serves as a coordination point for 1-deoxy-D-xylulose 5-phosphate. Residue H204 is the Proton donor of the active site. 3-amino-2-oxopropyl phosphate contacts are provided by residues D205 and 227–228 (GH).

It belongs to the PNP synthase family. As to quaternary structure, homooctamer; tetramer of dimers.

Its subcellular location is the cytoplasm. It carries out the reaction 3-amino-2-oxopropyl phosphate + 1-deoxy-D-xylulose 5-phosphate = pyridoxine 5'-phosphate + phosphate + 2 H2O + H(+). It participates in cofactor biosynthesis; pyridoxine 5'-phosphate biosynthesis; pyridoxine 5'-phosphate from D-erythrose 4-phosphate: step 5/5. Catalyzes the complicated ring closure reaction between the two acyclic compounds 1-deoxy-D-xylulose-5-phosphate (DXP) and 3-amino-2-oxopropyl phosphate (1-amino-acetone-3-phosphate or AAP) to form pyridoxine 5'-phosphate (PNP) and inorganic phosphate. This Xylella fastidiosa (strain M12) protein is Pyridoxine 5'-phosphate synthase.